Reading from the N-terminus, the 720-residue chain is Putative fatty acid oxidation complex trifunctional enzyme (720 aa).

Positions 1–384 (MQNEIKKVCV…SWHYGPFELL (384 aa)) are 3-hydroxyacyl-CoA dehydrogenase. The interval 453–720 (FVITTKMNSL…TIEKLQAIVG (268 aa)) is enoyl-CoA hydratase/isomerase.

This sequence in the N-terminal section; belongs to the 3-hydroxyacyl-CoA dehydrogenase family. It in the C-terminal section; belongs to the enoyl-CoA hydratase/isomerase family.

The enzyme catalyses a (3S)-3-hydroxyacyl-CoA + NAD(+) = a 3-oxoacyl-CoA + NADH + H(+). It catalyses the reaction a (3S)-3-hydroxyacyl-CoA = a (2E)-enoyl-CoA + H2O. The catalysed reaction is a 4-saturated-(3S)-3-hydroxyacyl-CoA = a (3E)-enoyl-CoA + H2O. It carries out the reaction a (3Z)-enoyl-CoA = a 4-saturated (2E)-enoyl-CoA. The enzyme catalyses a (3E)-enoyl-CoA = a 4-saturated (2E)-enoyl-CoA. This chain is Putative fatty acid oxidation complex trifunctional enzyme, found in Rickettsia prowazekii (strain Madrid E).